A 272-amino-acid polypeptide reads, in one-letter code: Phosphoglycolate phosphatase 1 (272 aa).

The active-site Nucleophile is the Asp19. Residues Asp19, Asp21, and Asp182 each coordinate Mg(2+).

The protein belongs to the HAD-like hydrolase superfamily. CbbY/CbbZ/Gph/YieH family. Mg(2+) serves as cofactor.

It carries out the reaction 2-phosphoglycolate + H2O = glycolate + phosphate. It functions in the pathway organic acid metabolism; glycolate biosynthesis; glycolate from 2-phosphoglycolate: step 1/1. Its function is as follows. Specifically catalyzes the dephosphorylation of 2-phosphoglycolate. Is involved in the dissimilation of the intracellular 2-phosphoglycolate formed during the DNA repair of 3'-phosphoglycolate ends, a major class of DNA lesions induced by oxidative stress. This is Phosphoglycolate phosphatase 1 from Pseudomonas aeruginosa (strain ATCC 15692 / DSM 22644 / CIP 104116 / JCM 14847 / LMG 12228 / 1C / PRS 101 / PAO1).